Consider the following 273-residue polypeptide: Dermonecrotic toxin LsaSicTox-alphaIB1ai (273 aa).

His-5 is an active-site residue. Residues Glu-25 and Asp-27 each coordinate Mg(2+). The active-site Nucleophile is His-41. 2 disulfide bridges follow: Cys-45–Cys-51 and Cys-47–Cys-190. Asp-85 is a binding site for Mg(2+).

This sequence belongs to the arthropod phospholipase D family. Class II subfamily. Mg(2+) serves as cofactor. Expressed by the venom gland.

It is found in the secreted. It carries out the reaction an N-(acyl)-sphingosylphosphocholine = an N-(acyl)-sphingosyl-1,3-cyclic phosphate + choline. The catalysed reaction is an N-(acyl)-sphingosylphosphoethanolamine = an N-(acyl)-sphingosyl-1,3-cyclic phosphate + ethanolamine. It catalyses the reaction a 1-acyl-sn-glycero-3-phosphocholine = a 1-acyl-sn-glycero-2,3-cyclic phosphate + choline. The enzyme catalyses a 1-acyl-sn-glycero-3-phosphoethanolamine = a 1-acyl-sn-glycero-2,3-cyclic phosphate + ethanolamine. Functionally, dermonecrotic toxins cleave the phosphodiester linkage between the phosphate and headgroup of certain phospholipids (sphingolipid and lysolipid substrates), forming an alcohol (often choline) and a cyclic phosphate. This toxin acts on sphingomyelin (SM). It may also act on ceramide phosphoethanolamine (CPE), lysophosphatidylcholine (LPC) and lysophosphatidylethanolamine (LPE), but not on lysophosphatidylserine (LPS), and lysophosphatidylglycerol (LPG). It acts by transphosphatidylation, releasing exclusively cyclic phosphate products as second products. Induces dermonecrosis, hemolysis, increased vascular permeability, edema, inflammatory response, and platelet aggregation. This is Dermonecrotic toxin LsaSicTox-alphaIB1ai from Loxosceles sabina (Tucson recluse spider).